Reading from the N-terminus, the 315-residue chain is UDP-N-acetylenolpyruvoylglucosamine reductase (315 aa).

In terms of domain architecture, FAD-binding PCMH-type spans 27–207 (RVGGPADVLY…TKRMNAITAR (181 aa)). R172 is a catalytic residue. Positions 214-236 (IREKTSGSTFANPDPPGTPNQRK) are disordered. S221 serves as the catalytic Proton donor. The active site involves E297.

The protein belongs to the MurB family. It depends on FAD as a cofactor.

It is found in the cytoplasm. The enzyme catalyses UDP-N-acetyl-alpha-D-muramate + NADP(+) = UDP-N-acetyl-3-O-(1-carboxyvinyl)-alpha-D-glucosamine + NADPH + H(+). The protein operates within cell wall biogenesis; peptidoglycan biosynthesis. Functionally, cell wall formation. This is UDP-N-acetylenolpyruvoylglucosamine reductase from Maricaulis maris (strain MCS10) (Caulobacter maris).